The following is a 262-amino-acid chain: Nodulation protein J (262 aa).

The ABC transmembrane type-2 domain occupies 33–259 (ASILGNLAEP…FLSVGLLQRR (227 aa)). 6 helical membrane-spanning segments follow: residues 35 to 55 (ILGN…GLGA), 62 to 82 (GIPY…MISA), 125 to 145 (ALLA…ASWP), 147 to 167 (VLFA…LAMI), 177 to 197 (YFIF…GAVF), and 236 to 256 (LHIS…VGLL).

Belongs to the ABC-2 integral membrane protein family. Lipooligosaccharide exporter (TC 3.A.1.102) subfamily. The complex is composed of two ATP-binding proteins (NodI) and two transmembrane proteins (NodJ).

It localises to the cell inner membrane. Part of the ABC transporter complex NodIJ involved in the export of the nodulation factors (Nod factors), the bacterial signal molecules that induce symbiosis and subsequent nodulation induction. Nod factors are LCO (lipo-chitin oligosaccharide), a modified beta-1,4-linked N-acetylglucosamine oligosaccharide. This subunit encodes the transporter. This Sinorhizobium fredii (strain NBRC 101917 / NGR234) protein is Nodulation protein J (nodJ).